Consider the following 286-residue polypeptide: Protease HtpX (286 aa).

Transmembrane regions (helical) follow at residues 4–24 and 33–53; these read ILLF…ILSL and TGLL…SLFL. His-139 serves as a coordination point for Zn(2+). Residue Glu-140 is part of the active site. His-143 serves as a coordination point for Zn(2+). 2 helical membrane passes run 147-167 and 186-206; these read GDMV…IFVS and IYFL…SMIA. Position 214 (Glu-214) interacts with Zn(2+).

The protein belongs to the peptidase M48B family. The cofactor is Zn(2+).

It is found in the cell inner membrane. This chain is Protease HtpX, found in Pasteurella multocida (strain Pm70).